Consider the following 204-residue polypeptide: Holliday junction branch migration complex subunit RuvA (204 aa).

The domain I stretch occupies residues 1–64 (MISRMKGIIL…EDAQLLYGFH (64 aa)). Residues 65–143 (HPKERAMFSE…NLNKNLFKST (79 aa)) are domain II. The segment at 144 to 155 (ADHMLSSVSTDL) is flexible linker. The interval 156–204 (SAKSAEAEAISALISLGYKPQEAAQLIKNIAQPDLDSQALIKHALRSTL) is domain III.

Belongs to the RuvA family. In terms of assembly, homotetramer. Forms an RuvA(8)-RuvB(12)-Holliday junction (HJ) complex. HJ DNA is sandwiched between 2 RuvA tetramers; dsDNA enters through RuvA and exits via RuvB. An RuvB hexamer assembles on each DNA strand where it exits the tetramer. Each RuvB hexamer is contacted by two RuvA subunits (via domain III) on 2 adjacent RuvB subunits; this complex drives branch migration. In the full resolvosome a probable DNA-RuvA(4)-RuvB(12)-RuvC(2) complex forms which resolves the HJ.

The protein localises to the cytoplasm. Its function is as follows. The RuvA-RuvB-RuvC complex processes Holliday junction (HJ) DNA during genetic recombination and DNA repair, while the RuvA-RuvB complex plays an important role in the rescue of blocked DNA replication forks via replication fork reversal (RFR). RuvA specifically binds to HJ cruciform DNA, conferring on it an open structure. The RuvB hexamer acts as an ATP-dependent pump, pulling dsDNA into and through the RuvAB complex. HJ branch migration allows RuvC to scan DNA until it finds its consensus sequence, where it cleaves and resolves the cruciform DNA. This is Holliday junction branch migration complex subunit RuvA from Hamiltonella defensa subsp. Acyrthosiphon pisum (strain 5AT).